The sequence spans 202 residues: Imidazoleglycerol-phosphate dehydratase (202 aa).

This sequence belongs to the imidazoleglycerol-phosphate dehydratase family.

It localises to the cytoplasm. The enzyme catalyses D-erythro-1-(imidazol-4-yl)glycerol 3-phosphate = 3-(imidazol-4-yl)-2-oxopropyl phosphate + H2O. It functions in the pathway amino-acid biosynthesis; L-histidine biosynthesis; L-histidine from 5-phospho-alpha-D-ribose 1-diphosphate: step 6/9. This Rhizobium leguminosarum bv. trifolii (strain WSM2304) protein is Imidazoleglycerol-phosphate dehydratase.